The chain runs to 701 residues: Ephexin-1 (701 aa).

Composition is skewed to basic and acidic residues over residues M1–K11 and G26–R48. A disordered region spans residues M1–D141. The segment at M1–K264 is regulatory region; modulates activity toward RHOA, RAC1 and CDC42. The span at A120 to T132 shows a compositional bias: polar residues. Y172 carries the post-translational modification Phosphotyrosine. The interval R187–A226 is disordered. The segment covering D206–P218 has biased composition (acidic residues). A DH domain is found at K264–G448. Positions W480 to R592 constitute a PH domain. Residues L603 to N664 form the SH3 domain. A compositionally biased stretch (basic and acidic residues) spans H679–K690. The tract at residues H679 to Q701 is disordered. The span at D691–Q701 shows a compositional bias: basic residues.

Interacts with CDK5R1 and EPHA4; activated by EPHA4 through the CDK5 kinase. Phosphorylation by CDK5 upon EPHA4 activation by EFNA1 may regulate dendritic spine morphogenesis. Src-dependent phosphorylation at Tyr-172 upon EPHA4 activation increases the guanine exchange factor activity toward RHOA. Expressed in telencephalic neurons (at protein level). Expressed in brain, spinal cord and testis.

It is found in the cytoplasm. Its subcellular location is the membrane. The protein resides in the cell projection. The protein localises to the growth cone. Its function is as follows. Acts as a guanine nucleotide exchange factor (GEF) which differentially activates the GTPases RHOA, RAC1 and CDC42. Plays a role in axon guidance regulating ephrin-induced growth cone collapse and dendritic spine morphogenesis. Upon activation by ephrin through EPHA4, the GEF activity switches toward RHOA resulting in its activation. Activated RHOA promotes cone retraction at the expense of RAC1- and CDC42-stimulated growth cone extension. In Rattus norvegicus (Rat), this protein is Ephexin-1 (Ngef).